A 140-amino-acid polypeptide reads, in one-letter code: uncharacterized protein (140 aa).

The tract at residues 121-140 (EEVKNGELIDPNVTTEDEKL) is disordered.

This is an uncharacterized protein from Schizosaccharomyces pombe (strain 972 / ATCC 24843) (Fission yeast).